A 132-amino-acid polypeptide reads, in one-letter code: Riboflavin kinase (132 aa).

G13–S18 contacts CDP. T40 and N42 together coordinate Mg(2+). The FMN site is built by T98 and E106. V111 to R114 serves as a coordination point for CDP.

This sequence belongs to the archaeal riboflavin kinase family. Mg(2+) serves as cofactor.

The enzyme catalyses riboflavin + CTP = CDP + FMN + H(+). It functions in the pathway cofactor biosynthesis; FMN biosynthesis; FMN from riboflavin (CTP route): step 1/1. Catalyzes the CTP-dependent phosphorylation of riboflavin (vitamin B2) to form flavin mononucleotide (FMN). This Aeropyrum pernix (strain ATCC 700893 / DSM 11879 / JCM 9820 / NBRC 100138 / K1) protein is Riboflavin kinase.